The sequence spans 1114 residues: Isoleucine--tRNA ligase (1114 aa).

The short motif at 61 to 71 (PTANGQPGTHH) is the 'HIGH' region element. A 'KMSKS' region motif is present at residues 640–644 (KMSKH). Position 643 (Lys-643) interacts with ATP.

This sequence belongs to the class-I aminoacyl-tRNA synthetase family. IleS type 2 subfamily. In terms of assembly, monomer. Zn(2+) is required as a cofactor.

The protein resides in the cytoplasm. It carries out the reaction tRNA(Ile) + L-isoleucine + ATP = L-isoleucyl-tRNA(Ile) + AMP + diphosphate. In terms of biological role, catalyzes the attachment of isoleucine to tRNA(Ile). As IleRS can inadvertently accommodate and process structurally similar amino acids such as valine, to avoid such errors it has two additional distinct tRNA(Ile)-dependent editing activities. One activity is designated as 'pretransfer' editing and involves the hydrolysis of activated Val-AMP. The other activity is designated 'posttransfer' editing and involves deacylation of mischarged Val-tRNA(Ile). The protein is Isoleucine--tRNA ligase of Cutibacterium acnes (strain DSM 16379 / KPA171202) (Propionibacterium acnes).